The following is a 66-amino-acid chain: Regulator of G-protein signaling 6 (66 aa).

The RGS domain maps to 1–66 (LAVQDLKKQP…EDAQEHIYKL (66 aa)).

As to quaternary structure, interacts with GNB5. Interacts with RGS7BP, leading to regulate the subcellular location of the heterodimer formed with GNB5. Interacts with GNAI1.

Its subcellular location is the cytoplasm. It is found in the cytosol. The protein localises to the membrane. It localises to the nucleus. The protein resides in the cell membrane. Its function is as follows. Regulates G protein-coupled receptor signaling cascades. Inhibits signal transduction by increasing the GTPase activity of G protein alpha subunits, thereby driving them into their inactive GDP-bound form. The RGS6/GNB5 dimer enhances GNAO1 GTPase activity. This chain is Regulator of G-protein signaling 6 (Rgs6), found in Rattus norvegicus (Rat).